Here is a 368-residue protein sequence, read N- to C-terminus: Probable dual-specificity RNA methyltransferase RlmN (368 aa).

Glu-100 functions as the Proton acceptor in the catalytic mechanism. The region spanning Gln-106 to Asp-344 is the Radical SAM core domain. Cysteines 113 and 349 form a disulfide. [4Fe-4S] cluster contacts are provided by Cys-120, Cys-124, and Cys-127. S-adenosyl-L-methionine-binding positions include Gly-172–Glu-173, Ser-204, Ser-227–His-229, and Asn-305. Cys-349 serves as the catalytic S-methylcysteine intermediate.

This sequence belongs to the radical SAM superfamily. RlmN family. The cofactor is [4Fe-4S] cluster.

It localises to the cytoplasm. The catalysed reaction is adenosine(2503) in 23S rRNA + 2 reduced [2Fe-2S]-[ferredoxin] + 2 S-adenosyl-L-methionine = 2-methyladenosine(2503) in 23S rRNA + 5'-deoxyadenosine + L-methionine + 2 oxidized [2Fe-2S]-[ferredoxin] + S-adenosyl-L-homocysteine. The enzyme catalyses adenosine(37) in tRNA + 2 reduced [2Fe-2S]-[ferredoxin] + 2 S-adenosyl-L-methionine = 2-methyladenosine(37) in tRNA + 5'-deoxyadenosine + L-methionine + 2 oxidized [2Fe-2S]-[ferredoxin] + S-adenosyl-L-homocysteine. Specifically methylates position 2 of adenine 2503 in 23S rRNA and position 2 of adenine 37 in tRNAs. This is Probable dual-specificity RNA methyltransferase RlmN from Streptococcus agalactiae serotype Ia (strain ATCC 27591 / A909 / CDC SS700).